A 152-amino-acid chain; its full sequence is Large ribosomal subunit protein uL15 (152 aa).

The tract at residues 1 to 54 (MGLKLNELSPGVGAKKTAHRKGRGIGSGLGKTGGRGVKGQKSRSGSGVRRGFEG) is disordered. Residues 24-37 (GIGSGLGKTGGRGV) show a composition bias toward gly residues.

The protein belongs to the universal ribosomal protein uL15 family. Part of the 50S ribosomal subunit.

In terms of biological role, binds to the 23S rRNA. This Psychrobacter sp. (strain PRwf-1) protein is Large ribosomal subunit protein uL15.